The sequence spans 395 residues: NAC domain-containing protein 7 (395 aa).

Residues 7 to 156 (VPPGFRFHPT…GWVVCRVFKK (150 aa)) enclose the NAC domain. Residues 107 to 162 (IGMRKTLVFYKGRAPNGQKSDWIMHEYRLETDENGTPQEEGWVVCRVFKKRLAAVR) mediate DNA binding. Polar residues-rich tracts occupy residues 344 to 362 (AATA…SNAE) and 382 to 395 (TAST…DLWK). Residues 344–395 (AATASASIQNNAKDTSNAEYQVDEEKDPKRASDMGEEYTASTSSSCQIDLWK) are disordered.

The protein belongs to the plant vascular related NAC-domain protein family. Interacts with NAC083/VNI2. As to expression, expressed in root, shoot and hypocotyl vascular elements, columella root caps, epidermal and cortex root cells and root-hypocotyl junctions. Observed predominantly in root imature xylem vessels. Present in root developing xylems. Specifically expressed in vessels in the secondary xylem of the root-hypocotyl region, and in vessels but not in interfascicular fibers in stems.

The protein localises to the nucleus. Functionally, transcription activator that binds to the secondary wall NAC binding element (SNBE), 5'-(T/A)NN(C/T)(T/C/G)TNNNNNNNA(A/C)GN(A/C/T)(A/T)-3', in the promoter of target genes. Involved in xylem formation by promoting the expression of secondary wall-associated transcription factors and of genes involved in secondary wall biosynthesis and programmed cell death, genes driven by the secondary wall NAC binding element (SNBE). Triggers thickening of secondary walls. In Arabidopsis thaliana (Mouse-ear cress), this protein is NAC domain-containing protein 7.